Reading from the N-terminus, the 1102-residue chain is Endocytosis protein end4 (1102 aa).

The 131-residue stretch at 9–139 folds into the ENTH domain; the sequence is DHMQSDASLM…SFHAQHPEFN (131 aa). Residues 265-334 form a disordered region; that stretch reads PHDPPDLEGD…SEPEPIQDFW (70 aa). A compositionally biased stretch (polar residues) spans 292–305; that stretch reads TGASTIAPQPTGTS. Residues 338–661 are a coiled coil; that stretch reads TLDQQLAAQQ…ESLLQLSKLQ (324 aa). One can recognise an I/LWEQ domain in the interval 858–1100; it reads LLNAPGENIE…DMRKTSYHVA (243 aa).

The protein belongs to the SLA2 family.

Its subcellular location is the cytoplasm. It is found in the cytoskeleton. In terms of biological role, required for cellular morphogenesis and polarization of the cortical cytoskeleton. Required for establishment of new polarized growth zones where it acts in actin organization. Involved plasma membrane internalization and is essential for fluid-phase endocytosis. The chain is Endocytosis protein end4 (end4) from Schizosaccharomyces pombe (strain 972 / ATCC 24843) (Fission yeast).